The following is a 224-amino-acid chain: Uracil-DNA glycosylase (224 aa).

The active-site Proton acceptor is the Asp65.

It belongs to the uracil-DNA glycosylase (UDG) superfamily. UNG family.

The protein localises to the cytoplasm. The enzyme catalyses Hydrolyzes single-stranded DNA or mismatched double-stranded DNA and polynucleotides, releasing free uracil.. Functionally, excises uracil residues from the DNA which can arise as a result of misincorporation of dUMP residues by DNA polymerase or due to deamination of cytosine. The protein is Uracil-DNA glycosylase of Buchnera aphidicola subsp. Baizongia pistaciae (strain Bp).